The primary structure comprises 81 residues: Elongation factor 1-beta (81 aa).

Belongs to the EF-1-beta/EF-1-delta family.

Promotes the exchange of GDP for GTP in EF-1-alpha/GDP, thus allowing the regeneration of EF-1-alpha/GTP that could then be used to form the ternary complex EF-1-alpha/GTP/AAtRNA. The sequence is that of Elongation factor 1-beta from Nanoarchaeum equitans (strain Kin4-M).